Consider the following 63-residue polypeptide: Large ribosomal subunit protein uL29 (63 aa).

This sequence belongs to the universal ribosomal protein uL29 family.

This chain is Large ribosomal subunit protein uL29, found in Histophilus somni (strain 129Pt) (Haemophilus somnus).